Reading from the N-terminus, the 457-residue chain is 1-carboxybiuret hydrolase subunit AtzE (457 aa).

Active-site charge relay system residues include Lys-74 and Ser-150. Ser-174 functions as the Acyl-ester intermediate in the catalytic mechanism.

This sequence belongs to the amidase family. As to quaternary structure, heterotetramer consisting of 2 AtzE and 2 AtzG subunits.

The catalysed reaction is 1-carboxybiuret + H2O = urea-1,3-dicarboxylate + NH4(+). Its pathway is xenobiotic degradation; atrazine degradation. In terms of biological role, hydrolyzes 1-carboxybiuret to urea-1,3-dicarboxylate and NH(3). This Pseudomonas sp. (strain ADP) protein is 1-carboxybiuret hydrolase subunit AtzE.